The chain runs to 311 residues: Porphobilinogen deaminase (311 aa).

Cysteine 241 is modified (S-(dipyrrolylmethanemethyl)cysteine).

This sequence belongs to the HMBS family. Monomer. Requires dipyrromethane as cofactor.

The catalysed reaction is 4 porphobilinogen + H2O = hydroxymethylbilane + 4 NH4(+). The protein operates within porphyrin-containing compound metabolism; protoporphyrin-IX biosynthesis; coproporphyrinogen-III from 5-aminolevulinate: step 2/4. Functionally, tetrapolymerization of the monopyrrole PBG into the hydroxymethylbilane pre-uroporphyrinogen in several discrete steps. The protein is Porphobilinogen deaminase (hemC) of Halalkalibacterium halodurans (strain ATCC BAA-125 / DSM 18197 / FERM 7344 / JCM 9153 / C-125) (Bacillus halodurans).